The chain runs to 72 residues: Teretoxin Tan11.1 (72 aa).

The signal sequence occupies residues 1–21 (MLATKMSVTFCFLLMLTTVML). Residues 22-31 (PTEAKTVAGR) constitute a propeptide that is removed on maturation.

This sequence belongs to the teretoxin H (TH) superfamily. Post-translationally, contains 4 disulfide bonds. As to expression, expressed by the venom duct.

The protein resides in the secreted. This is Teretoxin Tan11.1 from Terebra anilis (Auger snail).